A 136-amino-acid chain; its full sequence is Ribonuclease P protein component (136 aa).

The protein belongs to the RnpA family. Consists of a catalytic RNA component (M1 or rnpB) and a protein subunit.

The enzyme catalyses Endonucleolytic cleavage of RNA, removing 5'-extranucleotides from tRNA precursor.. Its function is as follows. RNaseP catalyzes the removal of the 5'-leader sequence from pre-tRNA to produce the mature 5'-terminus. It can also cleave other RNA substrates such as 4.5S RNA. The protein component plays an auxiliary but essential role in vivo by binding to the 5'-leader sequence and broadening the substrate specificity of the ribozyme. The polypeptide is Ribonuclease P protein component (Burkholderia mallei (strain NCTC 10247)).